A 611-amino-acid polypeptide reads, in one-letter code: MGSSKLKRAIGAVKDQTSVGLAKVGGRSSSLTELEIAVVKATRHDDYPAEDKYIREILCLTSYSRNYVSACVATLSRRLNKTKNWSVALKTLILIQRLLTDGDRAYEQEIFFATRRGTRLLNMSDFRDASQSDSWDYSAFVRTYALYLDERLDYRMQGRRGKKKSGGGGGGDGDSGEEDDHRGTSNDIRSKAIVVKSKPVAEMKTEKIFNRVQHLQQLLDRFLACRPTGNAKNNRVVIVAMYPIVKESFQLYYNITEIMGVLIERFMELDIHDSIKVYEIFCRVSKQFDELDPFYGWCKNMAVARSSEYPELEKITQKKLDLMDEFIRDKSALAAQTTKSSSKRSNKSEEEESKTEYIQENQEDLNSIKALPAPEQKEEEEEEEKMETKKDVEEVVSRQDQEGDLLDLTDEAGVTAGTVGDSLALALFDGVVGTESASGPGWEAFNDNSADWETDLVRSATRLSGQKSELGGGFDTLLLDGMYQYGAVNAAVKTSTAYGSSGSASSVAFGSAGSPAASMLALPAPPPTANGNRNSPVMVDPFAASLEVAPPAYVQMNDMEKKQRLLMEEQIMWDQYNRSGRQGHMNFGQNQQQQYYQLPYSMGPYSYTPRY.

The 137-residue stretch at 26–162 (GRSSSLTELE…DYRMQGRRGK (137 aa)) folds into the ENTH domain. Disordered regions lie at residues 158–184 (GRRG…HRGT) and 337–406 (TTKS…GDLL). Over residues 386–401 (METKKDVEEVVSRQDQ) the composition is skewed to basic and acidic residues.

It is found in the membrane. The protein localises to the clathrin-coated pit. Its subcellular location is the golgi apparatus. The protein resides in the cytoplasmic vesicle. It localises to the clathrin-coated vesicle. The sequence is that of Putative clathrin assembly protein At4g02650 from Arabidopsis thaliana (Mouse-ear cress).